The primary structure comprises 192 residues: MLPYEMVIAVLVYLSPAQILNLNLPFAYQKSVLFASNSAKVNERIRRRARDDNDDDPYFYYKQFIKINFLTKKIINVYNKTEKCIRATFDGRYVVTRDVLMCFVNKSYMKQLLREVDTRITLQQLVKMYSPEFGFYVNSKIMFVLTESVLASICLKHSFGKCEWLDKNIKTVCLQLRKICINNKQHSTCLSY.

Functionally, plays a role in the expression of ORF41, which itself is required for late gene expression. The sequence is that of Protein ORF45 from Autographa californica nuclear polyhedrosis virus (AcMNPV).